The chain runs to 249 residues: uncharacterized protein (249 aa).

Residues Trp3–Val23 form a helical membrane-spanning segment.

This sequence belongs to the band 7/mec-2 family.

Its subcellular location is the membrane. This is an uncharacterized protein from Archaeoglobus fulgidus (strain ATCC 49558 / DSM 4304 / JCM 9628 / NBRC 100126 / VC-16).